A 554-amino-acid chain; its full sequence is Methyl-CpG-binding domain protein 4 (554 aa).

Positions 1 to 23 (MESPNLGDNRVRGESLVPDPPWD) are disordered. In terms of domain architecture, MBD spans 63 to 135 (STTATEGHKP…EDFNFTVLPK (73 aa)). Over residues 154–164 (QPNETDVSKQN) the composition is skewed to polar residues. Disordered regions lie at residues 154–195 (QPNE…SNSN) and 209–252 (DVDS…RKRA). Residues 178–195 (LPSGTSESPESSGLSNSN) show a composition bias toward low complexity. A phosphoserine mark is found at S296 and S402. D534 is a catalytic residue.

As to quaternary structure, interacts with MLH1.

It is found in the nucleus. In terms of biological role, mismatch-specific DNA N-glycosylase involved in DNA repair. Has thymine glycosylase activity and is specific for G:T mismatches within methylated and unmethylated CpG sites. Can also remove uracil or 5-fluorouracil in G:U mismatches. Has no lyase activity. Was first identified as methyl-CpG-binding protein. The chain is Methyl-CpG-binding domain protein 4 (Mbd4) from Mus musculus (Mouse).